The sequence spans 591 residues: V-type ATP synthase alpha chain (591 aa).

233–240 contributes to the ATP binding site; the sequence is GPFGAGKT.

It belongs to the ATPase alpha/beta chains family.

The enzyme catalyses ATP + H2O + 4 H(+)(in) = ADP + phosphate + 5 H(+)(out). In terms of biological role, produces ATP from ADP in the presence of a proton gradient across the membrane. The V-type alpha chain is a catalytic subunit. This Streptococcus pyogenes serotype M28 (strain MGAS6180) protein is V-type ATP synthase alpha chain.